We begin with the raw amino-acid sequence, 124 residues long: Tax1-binding protein 3 (124 aa).

Position 2 is an N-acetylserine (Ser-2). In terms of domain architecture, PDZ spans 15–112; it reads RVEIHKLRQG…EVVRLLVTRQ (98 aa). Ser-61 is subject to Phosphoserine.

Interacts (via its PDZ domain) with GLS2. Interacts (via its PDZ domain) with RTKN (via the C-terminal region); this interaction facilitates Rho-mediated activation of the FOS serum response element (SRE). Interacts (via its PDZ domain) with CTNNB1; this interaction inhibits the transcriptional activity of CTNNB1. Interacts with HTLV-1 TAX protein. Interacts (via PDZ domain) with ARHGEF16. Interacts (via PDZ domain) with KCNJ4 (via C-terminus). Competes with LIN7A for KCNJ4 binding. Interacts with ADGRB2. In terms of tissue distribution, ubiquitous. Detected in brain, heart, kidney, lung, small intestine and skeletal muscle. Detected in various cell lines including HeLa. Weakly expressed in peripheral blood leukocytes.

The protein localises to the cytoplasm. The protein resides in the nucleus. Its subcellular location is the cell membrane. May regulate a number of protein-protein interactions by competing for PDZ domain binding sites. Binds CTNNB1 and may thereby act as an inhibitor of the Wnt signaling pathway. Competes with LIN7A for KCNJ4 binding, and thereby promotes KCNJ4 internalization. May play a role in the Rho signaling pathway. May play a role in activation of CDC42 by the viral protein HPV16 E6. In Homo sapiens (Human), this protein is Tax1-binding protein 3.